We begin with the raw amino-acid sequence, 207 residues long: Dephospho-CoA kinase (207 aa).

The 200-residue stretch at 4 to 203 (VIGLTGGIAS…EEGYIEKPNY (200 aa)) folds into the DPCK domain. An ATP-binding site is contributed by 12–17 (ASGKST).

The protein belongs to the CoaE family.

It localises to the cytoplasm. The catalysed reaction is 3'-dephospho-CoA + ATP = ADP + CoA + H(+). It participates in cofactor biosynthesis; coenzyme A biosynthesis; CoA from (R)-pantothenate: step 5/5. Functionally, catalyzes the phosphorylation of the 3'-hydroxyl group of dephosphocoenzyme A to form coenzyme A. The chain is Dephospho-CoA kinase from Staphylococcus aureus (strain MRSA252).